The sequence spans 329 residues: MLSLESEVLTRHLPLFANKSILLFGDVRDRFADQIKANAKSVAVFSSYFDYARQYADVSFGLYCEIKAELAVFYWTKNKQECQYQLLQWLSQVDVGQEMLIIGENRAGVRSVEKLLEPYGNIAKIDSARRCGLYHFELQSVPDFDGKKFWKSYRLQDLNIFALPAVFSSAELDGGTQLLLSTFNKADRLKGKVLDLGCGAGVIGASLKQQFEKIKLTMSDIHAMALESSRRTFAENALDGTVVASDVFSNIEERFDLIVSNPPFHDGIDTAYRAVEDLIAQAKQRLNRGGELRIVANAFLPYPDLLDKAFGSHQVIAKSNKFKVYSAKA.

The protein belongs to the methyltransferase superfamily. RsmC family. Monomer.

The protein localises to the cytoplasm. It catalyses the reaction guanosine(1207) in 16S rRNA + S-adenosyl-L-methionine = N(2)-methylguanosine(1207) in 16S rRNA + S-adenosyl-L-homocysteine + H(+). In terms of biological role, specifically methylates the guanine in position 1207 of 16S rRNA in the 30S particle. In Actinobacillus pleuropneumoniae serotype 5b (strain L20), this protein is Ribosomal RNA small subunit methyltransferase C.